The chain runs to 161 residues: Probable calcium-binding protein CML16 (161 aa).

EF-hand domains follow at residues D8–K43, P44–E79, I83–P118, and L119–D154. 19 residues coordinate Ca(2+): D21, D23, D25, S27, E32, D57, N59, N61, S63, E68, D96, D98, N100, S102, E107, D132, N134, D136, and E143.

Functionally, potential calcium sensor. The protein is Probable calcium-binding protein CML16 (CML16) of Arabidopsis thaliana (Mouse-ear cress).